A 125-amino-acid polypeptide reads, in one-letter code: Large ribosomal subunit protein bL20 (125 aa).

This sequence belongs to the bacterial ribosomal protein bL20 family.

Binds directly to 23S ribosomal RNA and is necessary for the in vitro assembly process of the 50S ribosomal subunit. It is not involved in the protein synthesizing functions of that subunit. This is Large ribosomal subunit protein bL20 from Methylobacterium sp. (strain 4-46).